We begin with the raw amino-acid sequence, 48 residues long: SFAVGSSYGAAPDPLEAQREVCELNPDCDELADHIGFQEAYRRFYGPV.

Positions 1–46 constitute a Gla domain; that stretch reads SFAVGSSYGAAPDPLEAQREVCELNPDCDELADHIGFQEAYRRFYG. Residues glutamate 16, glutamate 20, glutamate 23, and aspartate 29 each contribute to the Ca(2+) site. Glutamate 16, glutamate 20, and glutamate 23 each carry 4-carboxyglutamate. A disulfide bridge connects residues cysteine 22 and cysteine 28.

The protein belongs to the osteocalcin/matrix Gla protein family. Post-translationally, gamma-carboxyglutamate residues are formed by vitamin K dependent carboxylation by GGCX. These residues are essential for the binding of calcium.

The protein localises to the secreted. The carboxylated form is one of the main organic components of the bone matrix, which constitutes 1-2% of the total bone protein. The carboxylated form binds strongly to apatite and calcium. The sequence is that of Osteocalcin (BGLAP) from Dromaius novaehollandiae (Emu).